Here is a 234-residue protein sequence, read N- to C-terminus: Nuclear ubiquitous casein and cyclin-dependent kinase substrate 1 (234 aa).

A disordered region spans residues 1 to 234 (MSRPVRNRKV…SEDEASSGED (234 aa)). Position 13 is a phosphotyrosine (Tyr-13). 2 positions are modified to phosphoserine: Ser-14 and Ser-19. Tyr-26 carries the post-translational modification Phosphotyrosine. Basic residues predominate over residues 35–51 (KKIRSSPREAKNKRRSG). Residues Ser-54, Ser-58, Ser-61, Ser-73, Ser-75, and Ser-79 each carry the phosphoserine modification. The segment covering 64–77 (KDVKTKKDDSHSAE) has biased composition (basic and acidic residues). Positions 91 to 100 (QQRQAASKAA) are enriched in low complexity. The span at 111–124 (VGSEEEPEEDDEAP) shows a compositional bias: acidic residues. Residues Ser-113, Ser-130, Ser-132, and Ser-144 each carry the phosphoserine modification. The span at 132 to 145 (SDEDFLMEDDDDSD) shows a compositional bias: acidic residues. Positions 149–174 (SKKKNKKMVKKSKPERKEKKMPKPRL) are enriched in basic residues. Thr-179 is modified (phosphothreonine). Phosphoserine is present on Ser-181. Residues 185–199 (GKAKVGRPTASKKSK) are compositionally biased toward basic residues. Thr-202 is subject to Phosphothreonine. Phosphoserine is present on residues Ser-204, Ser-214, Ser-225, and Ser-231. The segment covering 223-234 (EGSEDEASSGED) has biased composition (acidic residues).

As to quaternary structure, does not interact with RAD51. Post-translationally, phosphorylated in an ATM-dependent manner in response to DNA damage. Phosphorylated by CDK1 and casein kinase.

It is found in the nucleus. Its subcellular location is the chromosome. Its function is as follows. Chromatin-associated protein involved in DNA repair by promoting homologous recombination (HR). Binds double-stranded DNA (dsDNA) and secondary DNA structures, such as D-loop structures, but with less affinity than RAD51AP1. This is Nuclear ubiquitous casein and cyclin-dependent kinase substrate 1 (Nucks1) from Mus musculus (Mouse).